The following is a 311-amino-acid chain: Homeobox-leucine zipper protein HOX13 (311 aa).

The interval 1-74 (MKRPTSSSRK…PSCGLGEKKR (74 aa)) is disordered. The span at 35-54 (DEAEMEEVDEEEEEEVDEDM) shows a compositional bias: acidic residues. Positions 69-128 (LGEKKRRLALEQVRALERSFDTDNKLDPDRKARIARDLGLQPRQVAVWFQNRRARWKTKQ) form a DNA-binding region, homeobox. Residues 127–171 (KQLERDFAALRARHDALRADCDALRRDKDALAAEIRELREKLPTK) are leucine-zipper.

Belongs to the HD-ZIP homeobox family. Class I subfamily. As to expression, expressed in seedlings, roots, stems, leaf sheaths and blades and panicles.

The protein resides in the nucleus. In terms of biological role, probable transcription factor. The chain is Homeobox-leucine zipper protein HOX13 (HOX13) from Oryza sativa subsp. japonica (Rice).